The sequence spans 407 residues: Multidrug resistance protein MdtH (407 aa).

10 helical membrane-spanning segments follow: residues 13–33 (CFLIIDNMFVVIGFYVVFPLI), 88–108 (LGFIIMSVANTPLLLCLSCML), 139–159 (VLMLEDSMCAIIGIVLGTWLL), 163–183 (FKLVCFTGAILFFIAGVFNAW), 210–230 (FVIYVFTLTGYYILSAQVMLM), 247–267 (WMYIIEAILSLLLIMPITWWS), 277–297 (LMVGLITMIISLFPIGLVKNL), 298–318 (HTLLILISLFYIGSIIAEPAR), 340–360 (LSLALGGTVGYSGSGWLYDIG), and 368–388 (LPWIILSIIGLITLLGLYCQF).

It belongs to the major facilitator superfamily. DHA1 family. MdtH (TC 2.A.1.2.21) subfamily.

Its subcellular location is the cell inner membrane. The protein is Multidrug resistance protein MdtH of Blochmanniella pennsylvanica (strain BPEN).